The chain runs to 143 residues: Large ribosomal subunit protein uL16 (143 aa).

Positions 1-14 (MLTPKRVKWRRQHR) are enriched in basic residues. Residues 1 to 23 (MLTPKRVKWRRQHRPDRAGKAKG) form a disordered region.

Belongs to the universal ribosomal protein uL16 family. Part of the 50S ribosomal subunit.

Functionally, binds 23S rRNA and is also seen to make contacts with the A and possibly P site tRNAs. The polypeptide is Large ribosomal subunit protein uL16 (Desulforudis audaxviator (strain MP104C)).